Reading from the N-terminus, the 550-residue chain is Chaperonin GroEL 2 (550 aa).

ATP is bound by residues 30 to 33 (TLGP), Lys-51, 87 to 91 (DGTTT), Gly-415, and Asp-496.

It belongs to the chaperonin (HSP60) family. In terms of assembly, forms a cylinder of 14 subunits composed of two heptameric rings stacked back-to-back. Interacts with the co-chaperonin GroES.

It is found in the cytoplasm. The catalysed reaction is ATP + H2O + a folded polypeptide = ADP + phosphate + an unfolded polypeptide.. Together with its co-chaperonin GroES, plays an essential role in assisting protein folding. The GroEL-GroES system forms a nano-cage that allows encapsulation of the non-native substrate proteins and provides a physical environment optimized to promote and accelerate protein folding. The polypeptide is Chaperonin GroEL 2 (Bradyrhizobium diazoefficiens (strain JCM 10833 / BCRC 13528 / IAM 13628 / NBRC 14792 / USDA 110)).